The following is a 199-amino-acid chain: Fe/S biogenesis protein NfuA (199 aa).

Residues cysteine 151 and cysteine 154 each contribute to the [4Fe-4S] cluster site.

It belongs to the NfuA family. Homodimer. Requires [4Fe-4S] cluster as cofactor.

Functionally, involved in iron-sulfur cluster biogenesis. Binds a 4Fe-4S cluster, can transfer this cluster to apoproteins, and thereby intervenes in the maturation of Fe/S proteins. Could also act as a scaffold/chaperone for damaged Fe/S proteins. This is Fe/S biogenesis protein NfuA from Xanthomonas euvesicatoria pv. vesicatoria (strain 85-10) (Xanthomonas campestris pv. vesicatoria).